Here is a 352-residue protein sequence, read N- to C-terminus: C-C chemokine receptor type 5 (352 aa).

At 1–30 (MDYQVSSPTYDIDYYTSEPCQKINVKQIAA) the chain is on the extracellular side. Tyr3 carries the sulfotyrosine modification. Ser6 and Ser7 each carry an O-linked (GalNAc...) serine glycan. A sulfotyrosine mark is found at Tyr10, Tyr14, and Tyr15. 2 disulfides stabilise this stretch: Cys20-Cys269 and Cys101-Cys178. The chain crosses the membrane as a helical span at residues 31–58 (RLLPPLYSLVFIFGFVGNILVVLILINC). The Cytoplasmic segment spans residues 59–68 (KRLKSMTDIY). Residues 69-89 (LLNLAISDLLFLLTVPFWAHY) form a helical membrane-spanning segment. Topologically, residues 90–102 (AAAQWDFGNIMCQ) are extracellular. Residues 103–124 (LLTGLYFIGFFSGIFFIILLTI) form a helical membrane-spanning segment. Residues 125-141 (DRYLAIVHAVFALKART) are Cytoplasmic-facing. The chain crosses the membrane as a helical span at residues 142–166 (VTFGVVTSVITWVVAVFASLPGIIF). The Extracellular segment spans residues 167-198 (TRSQREGLHYTCSSHFPYSQYQFWKNFRTLKI). A helical membrane pass occupies residues 199–218 (VILGLVLPLLVMVICYSGIL). Residues 219-235 (KTLLRCRNEKKRHRAVR) lie on the Cytoplasmic side of the membrane. The chain crosses the membrane as a helical span at residues 236 to 260 (LIFTIMIVYFLFWAPYNIVLLLNTF). Residues 261–277 (QEFFGLNNCSSSNRLDQ) lie on the Extracellular side of the membrane. Residues 278 to 301 (AMQVTETLGMTHCCINPIIYAFVG) form a helical membrane-spanning segment. Residues 302–352 (EKFRNYLLVFFQKHIAKRFCKCCSIFQQEAPERASSVYTRTTGEQEISVGL) are Cytoplasmic-facing. 3 S-palmitoyl cysteine lipidation sites follow: Cys321, Cys323, and Cys324. A phosphoserine; by BARK1 mark is found at Ser336, Ser337, and Ser349.

This sequence belongs to the G-protein coupled receptor 1 family. As to quaternary structure, interacts with PRAF2. Efficient ligand binding to CCL3/MIP-1alpha and CCL4/MIP-1beta requires sulfation, O-glycosylation and sialic acid modifications. Glycosylation on Ser-6 is required for efficient binding of CCL4. Interacts with GRK2. Interacts with ARRB1 and ARRB2. Interacts with CNIH4. Interacts with S100A4; this interaction stimulates T-lymphocyte chemotaxis. Sulfated on at least 2 of the N-terminal tyrosines. Sulfation is required for efficient binding of the chemokines, CCL3 and CCL4. In terms of processing, palmitoylation in the C-terminal is important for cell surface expression. Post-translationally, phosphorylation on serine residues in the C-terminal is stimulated by binding CC chemokines especially by APO-RANTES. O-glycosylated, but not N-glycosylated. Ser-6 appears to be the major site even if Ser-7 may be also O-glycosylated. Also sialylated glycans present which contribute to chemokine binding. Thr-16 and Ser-17 may also be glycosylated and, if so, with small moieties such as a T-antigen.

The protein resides in the cell membrane. Receptor for a number of inflammatory CC-chemokines including CCL3/MIP-1-alpha, CCL4/MIP-1-beta and RANTES and subsequently transduces a signal by increasing the intracellular calcium ion level. May play a role in the control of granulocytic lineage proliferation or differentiation. Participates in T-lymphocyte migration to the infection site by acting as a chemotactic receptor. The polypeptide is C-C chemokine receptor type 5 (CCR5) (Mandrillus leucophaeus (Drill)).